The primary structure comprises 597 residues: Hydrogenase-1 large chain (597 aa).

Ni(2+)-binding residues include Cys76, Cys79, Cys576, and Cys579.

It belongs to the [NiFe]/[NiFeSe] hydrogenase large subunit family. As to quaternary structure, heterodimer of a large and a small subunit. Ni(2+) is required as a cofactor.

The protein resides in the cell membrane. The catalysed reaction is H2 + A = AH2. The chain is Hydrogenase-1 large chain (hyaB) from Citrobacter freundii.